A 144-amino-acid polypeptide reads, in one-letter code: Large ribosomal subunit protein uL11 (144 aa).

It belongs to the universal ribosomal protein uL11 family. In terms of assembly, part of the ribosomal stalk of the 50S ribosomal subunit. Interacts with L10 and the large rRNA to form the base of the stalk. L10 forms an elongated spine to which L12 dimers bind in a sequential fashion forming a multimeric L10(L12)X complex. One or more lysine residues are methylated.

Its function is as follows. Forms part of the ribosomal stalk which helps the ribosome interact with GTP-bound translation factors. This Marinomonas sp. (strain MWYL1) protein is Large ribosomal subunit protein uL11.